An 87-amino-acid polypeptide reads, in one-letter code: MKSTIFVLTLLIFVSLYFNIIVYVSFSFIGTSEIVVPSSFKRVEGPVTAASADFCYKCSRGCYRRYRRPVFCQGSICRCSSFIDDGY.

The signal sequence occupies residues 1–34 (MKSTIFVLTLLIFVSLYFNIIVYVSFSFIGTSEI). Intrachain disulfides connect C55–C72, C58–C77, and C62–C79.

It belongs to the DEFL family.

The protein resides in the secreted. The polypeptide is Defensin-like protein 223 (Arabidopsis thaliana (Mouse-ear cress)).